Here is a 504-residue protein sequence, read N- to C-terminus: ATP synthase subunit alpha (504 aa).

Gly169–Thr176 is a binding site for ATP.

The protein belongs to the ATPase alpha/beta chains family. As to quaternary structure, F-type ATPases have 2 components, CF(1) - the catalytic core - and CF(0) - the membrane proton channel. CF(1) has five subunits: alpha(3), beta(3), gamma(1), delta(1), epsilon(1). CF(0) has three main subunits: a(1), b(2) and c(9-12). The alpha and beta chains form an alternating ring which encloses part of the gamma chain. CF(1) is attached to CF(0) by a central stalk formed by the gamma and epsilon chains, while a peripheral stalk is formed by the delta and b chains.

Its subcellular location is the cell membrane. The catalysed reaction is ATP + H2O + 4 H(+)(in) = ADP + phosphate + 5 H(+)(out). Functionally, produces ATP from ADP in the presence of a proton gradient across the membrane. The alpha chain is a regulatory subunit. This chain is ATP synthase subunit alpha, found in Clostridium botulinum (strain Eklund 17B / Type B).